A 500-amino-acid polypeptide reads, in one-letter code: Protein psiE (500 aa).

Residues 1 to 18 (MKLISVLITFLLATVIYS) form the signal peptide. N59 carries N-linked (GlcNAc...) asparagine glycosylation. Residues 114-256 (TYDTTRKIYV…KDYCGVCQGD (143 aa)) form the PA14 domain. 5 N-linked (GlcNAc...) asparagine glycosylation sites follow: N314, N341, N366, N420, and N469.

The protein belongs to the prespore-cell-inducing factor family.

It localises to the secreted. This is Protein psiE (psiE) from Dictyostelium discoideum (Social amoeba).